A 243-amino-acid polypeptide reads, in one-letter code: Leucyl/phenylalanyl-tRNA--protein transferase (243 aa).

Residues 1–22 (MHSQPYLLSPTPNTPFPPAEHA) form a disordered region.

The protein belongs to the L/F-transferase family.

It is found in the cytoplasm. The catalysed reaction is N-terminal L-lysyl-[protein] + L-leucyl-tRNA(Leu) = N-terminal L-leucyl-L-lysyl-[protein] + tRNA(Leu) + H(+). It catalyses the reaction N-terminal L-arginyl-[protein] + L-leucyl-tRNA(Leu) = N-terminal L-leucyl-L-arginyl-[protein] + tRNA(Leu) + H(+). The enzyme catalyses L-phenylalanyl-tRNA(Phe) + an N-terminal L-alpha-aminoacyl-[protein] = an N-terminal L-phenylalanyl-L-alpha-aminoacyl-[protein] + tRNA(Phe). Its function is as follows. Functions in the N-end rule pathway of protein degradation where it conjugates Leu, Phe and, less efficiently, Met from aminoacyl-tRNAs to the N-termini of proteins containing an N-terminal arginine or lysine. The sequence is that of Leucyl/phenylalanyl-tRNA--protein transferase from Xylella fastidiosa (strain M23).